We begin with the raw amino-acid sequence, 446 residues long: Exodeoxyribonuclease 7 large subunit (446 aa).

It belongs to the XseA family. In terms of assembly, heterooligomer composed of large and small subunits.

It is found in the cytoplasm. The enzyme catalyses Exonucleolytic cleavage in either 5'- to 3'- or 3'- to 5'-direction to yield nucleoside 5'-phosphates.. Its function is as follows. Bidirectionally degrades single-stranded DNA into large acid-insoluble oligonucleotides, which are then degraded further into small acid-soluble oligonucleotides. The chain is Exodeoxyribonuclease 7 large subunit from Ligilactobacillus salivarius (strain UCC118) (Lactobacillus salivarius).